We begin with the raw amino-acid sequence, 82 residues long: RNA-binding protein Hfq (82 aa).

The region spanning 11–71 is the Sm domain; the sequence is DTFLNHVRKT…ISTIMPGAPI (61 aa).

This sequence belongs to the Hfq family. As to quaternary structure, homohexamer.

Functionally, RNA chaperone that binds small regulatory RNA (sRNAs) and mRNAs to facilitate mRNA translational regulation in response to envelope stress, environmental stress and changes in metabolite concentrations. Also binds with high specificity to tRNAs. In Rhodopseudomonas palustris (strain BisA53), this protein is RNA-binding protein Hfq.